The sequence spans 543 residues: Chaperonin GroEL 1 (543 aa).

ATP is bound by residues 29 to 32 (TLGP), 86 to 90 (DGTTT), glycine 413, 479 to 481 (NAA), and aspartate 495.

It belongs to the chaperonin (HSP60) family. As to quaternary structure, forms a cylinder of 14 subunits composed of two heptameric rings stacked back-to-back. Interacts with the co-chaperonin GroES.

The protein resides in the cytoplasm. It catalyses the reaction ATP + H2O + a folded polypeptide = ADP + phosphate + an unfolded polypeptide.. Its function is as follows. Together with its co-chaperonin GroES, plays an essential role in assisting protein folding. The GroEL-GroES system forms a nano-cage that allows encapsulation of the non-native substrate proteins and provides a physical environment optimized to promote and accelerate protein folding. This chain is Chaperonin GroEL 1, found in Prochlorococcus marinus (strain NATL2A).